The chain runs to 199 residues: Fe/S biogenesis protein NfuA (199 aa).

2 residues coordinate [4Fe-4S] cluster: Cys156 and Cys159.

Belongs to the NfuA family. Homodimer. Requires [4Fe-4S] cluster as cofactor.

In terms of biological role, involved in iron-sulfur cluster biogenesis. Binds a 4Fe-4S cluster, can transfer this cluster to apoproteins, and thereby intervenes in the maturation of Fe/S proteins. Could also act as a scaffold/chaperone for damaged Fe/S proteins. In Haemophilus ducreyi (strain 35000HP / ATCC 700724), this protein is Fe/S biogenesis protein NfuA.